A 297-amino-acid chain; its full sequence is Elongation factor Ts (297 aa).

The tract at residues 82–85 (TDFV) is involved in Mg(2+) ion dislocation from EF-Tu. The segment covering 223-265 (AQTAAAAETAPPEVSEPEPAAAVTAEEPTPEPVAAAEQPAEPV) has biased composition (low complexity). Residues 223–297 (AQTAAAAETA…GKSRSNKKKK (75 aa)) are disordered. Over residues 286 to 297 (SGGKSRSNKKKK) the composition is skewed to basic residues.

The protein belongs to the EF-Ts family.

It is found in the cytoplasm. Functionally, associates with the EF-Tu.GDP complex and induces the exchange of GDP to GTP. It remains bound to the aminoacyl-tRNA.EF-Tu.GTP complex up to the GTP hydrolysis stage on the ribosome. The chain is Elongation factor Ts from Thermosynechococcus vestitus (strain NIES-2133 / IAM M-273 / BP-1).